The primary structure comprises 110 residues: Large ribosomal subunit protein uL22 (110 aa).

The protein belongs to the universal ribosomal protein uL22 family. In terms of assembly, part of the 50S ribosomal subunit.

Functionally, this protein binds specifically to 23S rRNA; its binding is stimulated by other ribosomal proteins, e.g. L4, L17, and L20. It is important during the early stages of 50S assembly. It makes multiple contacts with different domains of the 23S rRNA in the assembled 50S subunit and ribosome. The globular domain of the protein is located near the polypeptide exit tunnel on the outside of the subunit, while an extended beta-hairpin is found that lines the wall of the exit tunnel in the center of the 70S ribosome. The chain is Large ribosomal subunit protein uL22 from Mannheimia succiniciproducens (strain KCTC 0769BP / MBEL55E).